The chain runs to 1029 residues: MADKTPGGSQKASSKNRSSDVHSSGSSDAHMDASGPSDSDMPSRTRPKSPRKHNYRNESSRESLCDSPHQNLSRPLLENKLKAFSIGKMSTAKRTLSKKEQEELKKKEDEKAAAEIYEEFLAAFEGSDGNKVKTFVRGGVVNAAKDEHETDEKRGKIYKPSSRFADQKNPPNQSSNERPPSLLVIETKKPPLKKGEKEKKKSNLELFKEELKQIQEERDERHKTKGRLSRFEPPQSDSDGQRRSMDVPSRRNRSSGVLDDYAPGSHDVGDPSTTNLYLGNINPQMNEEMLCQEFGRFGPLASVKIMWPRTDEERARERNCGFVAFMNRRDAERALKNLNGKMIMSFEMKLGWGKAVPIPPHPIYIPPSMMEHTLPPPPSGLPFNAQPRERLKNPNAPMLPPPKNKEDFEKTLSQAIVKVVIPTERNLLALIHRMIEFVVREGPMFEAMIMNREINNPMFRFLFENQTPAHVYYRWKLYSILQGDSPTKWRTEDFRMFKNGSFWRPPPLNPYLHGMSEEQETEAFVEEPSKKGALKEEQRDKLEEILRGLTPRKNDIGDAMVFCLNNAEAAEEIVDCITESLSILKTPLPKKIARLYLVSDVLYNSSAKVANASYYRKFFETKLCQIFSDLNATYRTIQGHLQSENFKQRVMTCFRAWEDWAIYPEPFLIKLQNIFLGLVNIIEEKETEDVPDDLDGAPIEEELDGAPLEDVDGIPIDATPIDDLDGVPIKSLDDDLDGVPLDATEDSKKNEPIFKVAPSKWEAVDESELEAQAVTTSKWELFDQHEESEEEENQNQEEESEDEEDTQSSKSEEHHLYSNPVREEATESKFSKYSEMSEEKRAKLREIELKVMKFQDELESGKRPKKPGQSFQEQVEHYRDKLLQREKEKELERERERDKKDKEKLESRSKDKKEKDECTPTRKERKRRHSTSPSPSRSSSGRRVKSPSPKSERSERSERSHKESSRSRSSHKDSPRDASKKAKRSPSGSRTPKRSRRSRSRSPKKSGKKSRSQSRSPHRSHKKSKKNKH.

Disordered stretches follow at residues M1–E110 and V141–T273. An N-acetylalanine modification is found at A2. Over residues G7 to N16 the composition is skewed to polar residues. The segment covering T45 to N54 has biased composition (basic residues). Residues Y55 to L64 show a composition bias toward basic and acidic residues. At S67 the chain carries Phosphoserine. K80 is covalently cross-linked (Glycyl lysine isopeptide (Lys-Gly) (interchain with G-Cter in SUMO2)). Positions A92–L121 form a coiled coil. Composition is skewed to basic and acidic residues over residues S97–E110 and A144–G155. Glycyl lysine isopeptide (Lys-Gly) (interchain with G-Cter in SUMO2) cross-links involve residues K145 and K168. Over residues N169–R178 the composition is skewed to polar residues. Positions E186–H222 are enriched in basic and acidic residues. Residues L192–E232 are a coiled coil. Phosphoserine is present on S202. Residue K208 forms a Glycyl lysine isopeptide (Lys-Gly) (interchain with G-Cter in SUMO2) linkage. Phosphoserine is present on S236. A compositionally biased stretch (basic and acidic residues) spans D239–S249. In terms of domain architecture, RRM spans T274–A355. Residues L430 to Y473 form an SURP motif repeat. S485 is subject to Phosphoserine. The region spanning L534 to V679 is the CID domain. Residues D704 to I729 form a disordered region. The residue at position 719 (T719) is a Phosphothreonine. Glycyl lysine isopeptide (Lys-Gly) (interchain with G-Cter in SUMO2) cross-links involve residues K748 and K749. K760 bears the N6-acetyllysine; alternate mark. Residue K760 forms a Glycyl lysine isopeptide (Lys-Gly) (interchain with G-Cter in SUMO2); alternate linkage. Disordered stretches follow at residues K778–R841 and Q855–H1029. The segment covering E786–T806 has biased composition (acidic residues). A phosphoserine mark is found at S788, S800, and S811. 2 stretches are compositionally biased toward basic and acidic residues: residues K810–R841 and Q874–R922. Glycyl lysine isopeptide (Lys-Gly) (interchain with G-Cter in SUMO2) cross-links involve residues K829 and K832. A coiled-coil region spans residues S837–K915. T931 bears the Phosphothreonine mark. Residues S946 and S948 each carry the phosphoserine modification. Basic and acidic residues predominate over residues K950–K980. Positions T991–H1029 are enriched in basic residues.

This sequence belongs to the splicing factor SR family. In terms of assembly, interacts with ERBB4.

It is found in the nucleus. This is U2 snRNP-associated SURP motif-containing protein (U2surp) from Mus musculus (Mouse).